Reading from the N-terminus, the 325-residue chain is Glutarate 2-hydroxylase (325 aa).

The Fe cation site is built by His160, Asp162, and His292.

The protein belongs to the glutarate hydroxylase family. In terms of assembly, homotetramer. Requires Fe(2+) as cofactor.

It carries out the reaction glutarate + 2-oxoglutarate + O2 = (S)-2-hydroxyglutarate + succinate + CO2. It functions in the pathway amino-acid degradation. Functionally, acts as an alpha-ketoglutarate-dependent dioxygenase catalyzing hydroxylation of glutarate (GA) to L-2-hydroxyglutarate (L2HG). Functions in a L-lysine degradation pathway that proceeds via cadaverine, glutarate and L-2-hydroxyglutarate. This is Glutarate 2-hydroxylase from Escherichia coli O6:K15:H31 (strain 536 / UPEC).